The chain runs to 572 residues: Methionine--tRNA ligase (572 aa).

Positions 11–21 (PYINGIKHLGN) match the 'HIGH' region motif. Positions 143, 146, 156, and 159 each coordinate Zn(2+). The 'KMSKS' region motif lies at 346–350 (QFSTS). An ATP-binding site is contributed by Thr349.

It belongs to the class-I aminoacyl-tRNA synthetase family. MetG type 1 subfamily. As to quaternary structure, monomer. Zn(2+) serves as cofactor.

Its subcellular location is the cytoplasm. The catalysed reaction is tRNA(Met) + L-methionine + ATP = L-methionyl-tRNA(Met) + AMP + diphosphate. In terms of biological role, is required not only for elongation of protein synthesis but also for the initiation of all mRNA translation through initiator tRNA(fMet) aminoacylation. The protein is Methionine--tRNA ligase of Cereibacter sphaeroides (strain KD131 / KCTC 12085) (Rhodobacter sphaeroides).